We begin with the raw amino-acid sequence, 131 residues long: Ribosome-binding factor A (131 aa).

This sequence belongs to the RbfA family. Monomer. Binds 30S ribosomal subunits, but not 50S ribosomal subunits or 70S ribosomes.

The protein resides in the cytoplasm. One of several proteins that assist in the late maturation steps of the functional core of the 30S ribosomal subunit. Associates with free 30S ribosomal subunits (but not with 30S subunits that are part of 70S ribosomes or polysomes). Required for efficient processing of 16S rRNA. May interact with the 5'-terminal helix region of 16S rRNA. This chain is Ribosome-binding factor A, found in Pseudomonas fluorescens (strain SBW25).